A 253-amino-acid polypeptide reads, in one-letter code: Major prion protein (253 aa).

The signal sequence occupies residues methionine 1–cysteine 22. The segment at lysine 23–serine 230 is interaction with GRB2, ERI3 and SYN1. The tract at residues proline 26–serine 108 is disordered. Tandem repeats lie at residues proline 51–glutamine 59, proline 60–glutamine 67, proline 68–glutamine 75, proline 76–glutamine 83, and proline 84–glutamine 91. Residues proline 51–glutamine 91 are 5 X 8 AA tandem repeats of P-H-G-G-G-W-G-Q. A compositionally biased stretch (gly residues) spans glutamine 52–threonine 95. Residues histidine 61, glycine 62, glycine 63, histidine 69, glycine 70, glycine 71, histidine 77, glycine 78, glycine 79, histidine 85, glycine 86, and glycine 87 each contribute to the Cu(2+) site. A disulfide bridge connects residues cysteine 179 and cysteine 214. N-linked (GlcNAc...) asparagine glycans are attached at residues asparagine 181 and asparagine 197. Residue serine 230 is the site of GPI-anchor amidated serine attachment. The propeptide at serine 231–glycine 253 is removed in mature form.

The protein belongs to the prion family. As to quaternary structure, monomer and homodimer. Has a tendency to aggregate into amyloid fibrils containing a cross-beta spine, formed by a steric zipper of superposed beta-strands. Soluble oligomers may represent an intermediate stage on the path to fibril formation. Copper binding may promote oligomerization. Interacts with GRB2, APP, ERI3/PRNPIP and SYN1. Mislocalized cytosolically exposed PrP interacts with MGRN1; this interaction alters MGRN1 subcellular location and causes lysosomal enlargement. Interacts with KIAA1191.

It localises to the cell membrane. It is found in the golgi apparatus. Functionally, its primary physiological function is unclear. Has cytoprotective activity against internal or environmental stresses. May play a role in neuronal development and synaptic plasticity. May be required for neuronal myelin sheath maintenance. May play a role in iron uptake and iron homeostasis. Soluble oligomers are toxic to cultured neuroblastoma cells and induce apoptosis (in vitro). Association with GPC1 (via its heparan sulfate chains) targets PRNP to lipid rafts. Also provides Cu(2+) or Zn(2+) for the ascorbate-mediated GPC1 deaminase degradation of its heparan sulfate side chains. The chain is Major prion protein (PRNP) from Trachypithecus francoisi (Francois' leaf monkey).